A 261-amino-acid polypeptide reads, in one-letter code: uncharacterized protein (261 aa).

22–46 is an NADP(+) binding site; sequence IVTGGNSGLGQAFAMALAKAGANIF. Residue S153 participates in substrate binding. Residue Y166 is the Proton acceptor of the active site.

This sequence belongs to the short-chain dehydrogenases/reductases (SDR) family.

This is an uncharacterized protein from Escherichia coli (strain K12).